Consider the following 378-residue polypeptide: Ribosomal RNA large subunit methyltransferase G (378 aa).

The protein belongs to the methyltransferase superfamily. RlmG family.

It localises to the cytoplasm. The catalysed reaction is guanosine(1835) in 23S rRNA + S-adenosyl-L-methionine = N(2)-methylguanosine(1835) in 23S rRNA + S-adenosyl-L-homocysteine + H(+). Its function is as follows. Specifically methylates the guanine in position 1835 (m2G1835) of 23S rRNA. The polypeptide is Ribosomal RNA large subunit methyltransferase G (Escherichia coli O157:H7).